A 256-amino-acid polypeptide reads, in one-letter code: Alcohol dehydrogenase (256 aa).

12–35 (FVAGLGGIGLDTSKELVKRDLKNL) provides a ligand contact to NAD(+). A substrate-binding site is contributed by serine 140. The active-site Proton acceptor is the tyrosine 153.

Belongs to the short-chain dehydrogenases/reductases (SDR) family. As to quaternary structure, homodimer.

It catalyses the reaction a primary alcohol + NAD(+) = an aldehyde + NADH + H(+). The enzyme catalyses a secondary alcohol + NAD(+) = a ketone + NADH + H(+). This is Alcohol dehydrogenase (Adh) from Drosophila erecta (Fruit fly).